Consider the following 603-residue polypeptide: Methylenetetrahydrofolate reductase 1 (603 aa).

Catalysis depends on Glu21, which acts as the Proton donor/acceptor. NAD(+) contacts are provided by residues 21 to 26 (EFFPPK) and 53 to 54 (TW). Residues 53 to 54 (TW), His82, 112 to 114 (RGD), 130 to 131 (YA), Tyr153, and Lys173 each bind FAD. Residue Asp114 coordinates substrate. Substrate contacts are provided by Gln184 and Tyr276. Position 355 is a phosphoserine (Ser355).

This sequence belongs to the methylenetetrahydrofolate reductase family. Requires FAD as cofactor.

The enzyme catalyses (6S)-5-methyl-5,6,7,8-tetrahydrofolate + NADP(+) = (6R)-5,10-methylene-5,6,7,8-tetrahydrofolate + NADPH + H(+). The catalysed reaction is (6S)-5-methyl-5,6,7,8-tetrahydrofolate + NAD(+) = (6R)-5,10-methylene-5,6,7,8-tetrahydrofolate + NADH + H(+). Its pathway is one-carbon metabolism; tetrahydrofolate interconversion. Functionally, major methylenetetrahydrofolate reductase required to generate the methyl groups necessary for methionine synthetase to convert homocysteine to methionine. Performs 80 to 85 percent of the total methylenetetrahydrofolate reductase activity of the cells. This chain is Methylenetetrahydrofolate reductase 1 (met9), found in Schizosaccharomyces pombe (strain 972 / ATCC 24843) (Fission yeast).